The sequence spans 338 residues: Glycerol-3-phosphate dehydrogenase [NAD(P)+] (338 aa).

4 residues coordinate NADPH: serine 14, tyrosine 15, histidine 35, and lysine 109. Sn-glycerol 3-phosphate contacts are provided by lysine 109, glycine 138, and threonine 140. Residue alanine 142 participates in NADPH binding. The sn-glycerol 3-phosphate site is built by lysine 194, aspartate 247, serine 257, arginine 258, and asparagine 259. Lysine 194 acts as the Proton acceptor in catalysis. Arginine 258 serves as a coordination point for NADPH. Residues valine 282 and glutamate 284 each contribute to the NADPH site.

This sequence belongs to the NAD-dependent glycerol-3-phosphate dehydrogenase family.

The protein resides in the cytoplasm. The catalysed reaction is sn-glycerol 3-phosphate + NAD(+) = dihydroxyacetone phosphate + NADH + H(+). The enzyme catalyses sn-glycerol 3-phosphate + NADP(+) = dihydroxyacetone phosphate + NADPH + H(+). It participates in membrane lipid metabolism; glycerophospholipid metabolism. Its function is as follows. Catalyzes the reduction of the glycolytic intermediate dihydroxyacetone phosphate (DHAP) to sn-glycerol 3-phosphate (G3P), the key precursor for phospholipid synthesis. The polypeptide is Glycerol-3-phosphate dehydrogenase [NAD(P)+] (Shewanella putrefaciens (strain CN-32 / ATCC BAA-453)).